Here is a 452-residue protein sequence, read N- to C-terminus: UDP-N-acetylmuramoyl-L-alanine--L-glutamate ligase (452 aa).

Residue 118-124 coordinates ATP; it reads GSKGKST.

Belongs to the MurCDEF family. MurD2 subfamily.

The protein resides in the cytoplasm. The enzyme catalyses UDP-N-acetyl-alpha-D-muramoyl-L-alanine + L-glutamate + ATP = UDP-N-acetyl-alpha-D-muramoyl-L-alanyl-L-glutamate + ADP + phosphate + H(+). It functions in the pathway cell wall biogenesis; peptidoglycan biosynthesis. Its function is as follows. Cell wall formation. Catalyzes the addition of L-glutamate to the nucleotide precursor UDP-N-acetylmuramoyl-L-alanine. The polypeptide is UDP-N-acetylmuramoyl-L-alanine--L-glutamate ligase (Micromonospora sp. (strain ATCC 39149 / NRRL 15099 / SCC 1413)).